A 329-amino-acid polypeptide reads, in one-letter code: MWITTTPWSKHSPNWVLADNGEKLIVPEIILGDAQGPTRNEWYIGLSSVLGFSFWSPDYDGVGTWLDAATQLNEQGGGDVITYSSGAHIVRTLLLAASQSNVHSTFTSKALGNDQTSSMTSSTTAVTVAKSGDGQQQTGEQKEEDWKDISKADLFKDDPYVLKNFGDSTTQAKMQSGGSTNSNGNGSQASLAFTKKALSLLKFLVDNKILKKDKVKEAIMNPDQYLSKRSKLDSNNQKPTKDDFIGSEFKDLYENAAKLNRFNSIWAEKDTDNAKFLITVVDSYFPVLPVPAAGLNETSPTLLKPWFQFRSAPSGNGTIRDYGFIPENK.

Positions 109 to 147 are disordered; the sequence is KALGNDQTSSMTSSTTAVTVAKSGDGQQQTGEQKEEDWK. Positions 116–131 are enriched in low complexity; that stretch reads TSSMTSSTTAVTVAKS.

This sequence to the C-terminal of MG321/MPN_456.

This is an uncharacterized protein from Mycoplasma pneumoniae (strain ATCC 29342 / M129 / Subtype 1) (Mycoplasmoides pneumoniae).